The sequence spans 407 residues: Elongation factor Tu (407 aa).

The region spanning 10–217 (KPHVNVGTIG…TLDEYIPEPE (208 aa)) is the tr-type G domain. A G1 region spans residues 19 to 26 (GHVDHGKT). Residue 19–26 (GHVDHGKT) participates in GTP binding. T26 serves as a coordination point for Mg(2+). The segment at 60–64 (GITIA) is G2. The tract at residues 81–84 (DCPG) is G3. GTP-binding positions include 81-85 (DCPGH) and 136-139 (NKAD). Positions 136-139 (NKAD) are G4. The segment at 184–186 (SAL) is G5.

This sequence belongs to the TRAFAC class translation factor GTPase superfamily. Classic translation factor GTPase family. EF-Tu/EF-1A subfamily. Monomer.

It localises to the cytoplasm. It carries out the reaction GTP + H2O = GDP + phosphate + H(+). Its function is as follows. GTP hydrolase that promotes the GTP-dependent binding of aminoacyl-tRNA to the A-site of ribosomes during protein biosynthesis. This is Elongation factor Tu from Teredinibacter turnerae (strain ATCC 39867 / T7901).